We begin with the raw amino-acid sequence, 428 residues long: Chaperone SurA (428 aa).

The N-terminal stretch at 1-20 (MKNWKTLLLGIAMIANTSFA) is a signal peptide. PpiC domains lie at 171 to 272 (STEL…KVND) and 282 to 382 (VTEV…ELLD).

The protein localises to the periplasm. The catalysed reaction is [protein]-peptidylproline (omega=180) = [protein]-peptidylproline (omega=0). Functionally, chaperone involved in the correct folding and assembly of outer membrane proteins. Recognizes specific patterns of aromatic residues and the orientation of their side chains, which are found more frequently in integral outer membrane proteins. May act in both early periplasmic and late outer membrane-associated steps of protein maturation. This Salmonella choleraesuis (strain SC-B67) protein is Chaperone SurA.